The chain runs to 112 residues: UPF0342 protein SGO_1370 (112 aa).

The protein belongs to the UPF0342 family.

The sequence is that of UPF0342 protein SGO_1370 from Streptococcus gordonii (strain Challis / ATCC 35105 / BCRC 15272 / CH1 / DL1 / V288).